The following is a 258-amino-acid chain: Imidazole glycerol phosphate synthase subunit HisF (258 aa).

Catalysis depends on residues aspartate 11 and aspartate 130.

The protein belongs to the HisA/HisF family. As to quaternary structure, heterodimer of HisH and HisF.

It localises to the cytoplasm. It catalyses the reaction 5-[(5-phospho-1-deoxy-D-ribulos-1-ylimino)methylamino]-1-(5-phospho-beta-D-ribosyl)imidazole-4-carboxamide + L-glutamine = D-erythro-1-(imidazol-4-yl)glycerol 3-phosphate + 5-amino-1-(5-phospho-beta-D-ribosyl)imidazole-4-carboxamide + L-glutamate + H(+). It participates in amino-acid biosynthesis; L-histidine biosynthesis; L-histidine from 5-phospho-alpha-D-ribose 1-diphosphate: step 5/9. IGPS catalyzes the conversion of PRFAR and glutamine to IGP, AICAR and glutamate. The HisF subunit catalyzes the cyclization activity that produces IGP and AICAR from PRFAR using the ammonia provided by the HisH subunit. The sequence is that of Imidazole glycerol phosphate synthase subunit HisF from Baumannia cicadellinicola subsp. Homalodisca coagulata.